The primary structure comprises 84 residues: Small ribosomal subunit protein bS18 (84 aa).

It belongs to the bacterial ribosomal protein bS18 family. As to quaternary structure, part of the 30S ribosomal subunit. Forms a tight heterodimer with protein bS6.

Its function is as follows. Binds as a heterodimer with protein bS6 to the central domain of the 16S rRNA, where it helps stabilize the platform of the 30S subunit. This chain is Small ribosomal subunit protein bS18, found in Helicobacter hepaticus (strain ATCC 51449 / 3B1).